The primary structure comprises 296 residues: Cytidine deaminase (296 aa).

CMP/dCMP-type deaminase domains lie at 47–167 (TEAE…FGPK) and 186–296 (DSSD…VDPV). Position 88-90 (88-90 (NLE)) interacts with substrate. His-101 is a Zn(2+) binding site. Catalysis depends on Glu-103, which acts as the Proton donor. Cys-128 and Cys-131 together coordinate Zn(2+).

Belongs to the cytidine and deoxycytidylate deaminase family. In terms of assembly, homodimer. Requires Zn(2+) as cofactor.

The catalysed reaction is cytidine + H2O + H(+) = uridine + NH4(+). It carries out the reaction 2'-deoxycytidine + H2O + H(+) = 2'-deoxyuridine + NH4(+). In terms of biological role, this enzyme scavenges exogenous and endogenous cytidine and 2'-deoxycytidine for UMP synthesis. The chain is Cytidine deaminase from Shewanella sp. (strain W3-18-1).